Consider the following 566-residue polypeptide: Proline--tRNA ligase (566 aa).

This sequence belongs to the class-II aminoacyl-tRNA synthetase family. ProS type 1 subfamily. As to quaternary structure, homodimer.

Its subcellular location is the cytoplasm. The catalysed reaction is tRNA(Pro) + L-proline + ATP = L-prolyl-tRNA(Pro) + AMP + diphosphate. In terms of biological role, catalyzes the attachment of proline to tRNA(Pro) in a two-step reaction: proline is first activated by ATP to form Pro-AMP and then transferred to the acceptor end of tRNA(Pro). As ProRS can inadvertently accommodate and process non-cognate amino acids such as alanine and cysteine, to avoid such errors it has two additional distinct editing activities against alanine. One activity is designated as 'pretransfer' editing and involves the tRNA(Pro)-independent hydrolysis of activated Ala-AMP. The other activity is designated 'posttransfer' editing and involves deacylation of mischarged Ala-tRNA(Pro). The misacylated Cys-tRNA(Pro) is not edited by ProRS. This is Proline--tRNA ligase from Bacillus anthracis (strain A0248).